The following is an 88-amino-acid chain: Small ribosomal subunit protein uS15c (88 aa).

It belongs to the universal ribosomal protein uS15 family. As to quaternary structure, part of the 30S ribosomal subunit.

It is found in the plastid. Its subcellular location is the chloroplast. The sequence is that of Small ribosomal subunit protein uS15c (rps15) from Arabidopsis thaliana (Mouse-ear cress).